A 959-amino-acid chain; its full sequence is Oxysterol-binding protein-related protein 6 (959 aa).

The segment at 1-60 (MSSDEKGISPAHKTSTPTHRSASSSTSSQRESRQSIHVLERTASSSTEPSVSRQLLEPEP) is disordered. Ser-2 carries the post-translational modification N-acetylserine. Over residues 14–29 (TSTPTHRSASSSTSSQ) the composition is skewed to low complexity. Over residues 30–40 (RESRQSIHVLE) the composition is skewed to basic and acidic residues. Position 35 is a phosphoserine (Ser-35). Positions 42–53 (TASSSTEPSVSR) are enriched in polar residues. A PH domain is found at 86-181 (PDRHEGFMLK…WVSKLRHHRL (96 aa)). Ser-190 and Ser-290 each carry phosphoserine.

Belongs to the OSBP family. In terms of assembly, homodimer. Interacts with OSBPL3. As to expression, expressed in skin, respiratory epithelium, small intestine epithelium, pancreas, striated muscle, brain, spinal ganglia, and nervous plexus of the intestine (at protein level). In the brain, specifically in the cerebellum, it is expressed in Purkinje and granule cells. Expressed in hepatocytes and macrophages.

The protein resides in the nucleus envelope. The protein localises to the cytoplasm. It is found in the cytosol. It localises to the endoplasmic reticulum membrane. Its subcellular location is the cell membrane. The protein resides in the endosome membrane. Regulates cellular transport and efflux of cholesterol. Plays a role in phosphatidylinositol-4-phophate (PI4P) turnover at the neuronal membrane. Binds via its PH domain PI4P, phosphatidylinositol-4,5-diphosphate, phosphatidylinositol-3,4,5-triphosphate, and phosphatidic acid. Weakly binds 25-hydroxycholesterol. This chain is Oxysterol-binding protein-related protein 6 (Osbpl6), found in Mus musculus (Mouse).